Reading from the N-terminus, the 53-residue chain is uncharacterized protein (53 aa).

This is an uncharacterized protein from Saccharomyces cerevisiae (strain ATCC 204508 / S288c) (Baker's yeast).